The chain runs to 222 residues: uncharacterized protein (222 aa).

This is an uncharacterized protein from Homo sapiens (Human).